Reading from the N-terminus, the 137-residue chain is Oleosin Ara h 11.0101 (137 aa).

Residue alanine 2 is modified to N-acetylalanine; alternate. The next 2 membrane-spanning stretches (helical) occupy residues 27–47 (AVVA…GTVI) and 55–75 (LFVI…LLGL).

The protein belongs to the oleosin family. As to expression, expressed in seeds (at protein level).

Its subcellular location is the lipid droplet. It localises to the membrane. Functionally, may have a structural role to stabilize the lipid body during desiccation of the seed by preventing coalescence of the oil. Probably interacts with both lipid and phospholipid moieties of lipid bodies. May also provide recognition signals for specific lipase anchorage in lipolysis during seedling growth. The polypeptide is Oleosin Ara h 11.0101 (Arachis hypogaea (Peanut)).